Consider the following 147-residue polypeptide: Phospholipase A2 inhibitor subunit A (147 aa).

One can recognise a C-type lectin domain in the interval 62–143; sequence EICEEAGGHI…DENLLVVCEF (82 aa). Intrachain disulfides connect Cys-64–Cys-141 and Cys-119–Cys-133. The N-linked (GlcNAc...) asparagine glycan is linked to Asn-103.

The protein belongs to the alpha-type phospholipase A2 inhibitor family. As to quaternary structure, homo- or heterotrimer; homotrimer of PLI-A chains, two PLI-A and one PLI-B chains, one PLI-A and two PLI-B chains, and homotrimer of PLI-B chains (with a ratio of 1:3:3:1). Expressed by the liver.

It is found in the secreted. In terms of biological role, PLI binds directly phospholipase A2 in the presence or absence of calcium. Inhibitory activity of the PLI-A homotrimer is more specific than that of the PLI-B homotrimer. In Protobothrops flavoviridis (Habu), this protein is Phospholipase A2 inhibitor subunit A.